Consider the following 513-residue polypeptide: ATP synthase subunit alpha (513 aa).

Position 169-176 (169-176 (GDRQTGKT)) interacts with ATP.

It belongs to the ATPase alpha/beta chains family. As to quaternary structure, F-type ATPases have 2 components, CF(1) - the catalytic core - and CF(0) - the membrane proton channel. CF(1) has five subunits: alpha(3), beta(3), gamma(1), delta(1), epsilon(1). CF(0) has three main subunits: a(1), b(2) and c(9-12). The alpha and beta chains form an alternating ring which encloses part of the gamma chain. CF(1) is attached to CF(0) by a central stalk formed by the gamma and epsilon chains, while a peripheral stalk is formed by the delta and b chains.

It localises to the cell inner membrane. The catalysed reaction is ATP + H2O + 4 H(+)(in) = ADP + phosphate + 5 H(+)(out). Functionally, produces ATP from ADP in the presence of a proton gradient across the membrane. The alpha chain is a regulatory subunit. In Nitrosomonas europaea (strain ATCC 19718 / CIP 103999 / KCTC 2705 / NBRC 14298), this protein is ATP synthase subunit alpha.